Consider the following 427-residue polypeptide: Serine hydroxymethyltransferase (427 aa).

Residues leucine 122 and 126–128 each bind (6S)-5,6,7,8-tetrahydrofolate; that span reads GHL. Residue lysine 231 is modified to N6-(pyridoxal phosphate)lysine. 355–357 serves as a coordination point for (6S)-5,6,7,8-tetrahydrofolate; it reads SPF.

This sequence belongs to the SHMT family. In terms of assembly, homodimer. Requires pyridoxal 5'-phosphate as cofactor.

It is found in the cytoplasm. The catalysed reaction is (6R)-5,10-methylene-5,6,7,8-tetrahydrofolate + glycine + H2O = (6S)-5,6,7,8-tetrahydrofolate + L-serine. Its pathway is one-carbon metabolism; tetrahydrofolate interconversion. It participates in amino-acid biosynthesis; glycine biosynthesis; glycine from L-serine: step 1/1. Catalyzes the reversible interconversion of serine and glycine with tetrahydrofolate (THF) serving as the one-carbon carrier. This reaction serves as the major source of one-carbon groups required for the biosynthesis of purines, thymidylate, methionine, and other important biomolecules. Also exhibits THF-independent aldolase activity toward beta-hydroxyamino acids, producing glycine and aldehydes, via a retro-aldol mechanism. In Synechococcus sp. (strain ATCC 27144 / PCC 6301 / SAUG 1402/1) (Anacystis nidulans), this protein is Serine hydroxymethyltransferase.